Consider the following 406-residue polypeptide: 2,3-diketo-5-methylthiopentyl-1-phosphate enolase (406 aa).

Catalysis depends on lysine 94, which acts as the Proton acceptor. Substrate is bound by residues lysine 143, 169–172, histidine 260, glycine 332, and 354–355; these read KDDE and GG. The Mg(2+) site is built by lysine 169, aspartate 171, and glutamate 172. Lysine 169 is modified (N6-carboxylysine).

The protein belongs to the RuBisCO large chain family. Type IV subfamily. As to quaternary structure, homodimer. Mg(2+) is required as a cofactor.

It carries out the reaction 5-methylsulfanyl-2,3-dioxopentyl phosphate = 2-hydroxy-5-methylsulfanyl-3-oxopent-1-enyl phosphate. It functions in the pathway amino-acid biosynthesis; L-methionine biosynthesis via salvage pathway; L-methionine from S-methyl-5-thio-alpha-D-ribose 1-phosphate: step 3/6. In terms of biological role, catalyzes the enolization of 2,3-diketo-5-methylthiopentyl-1-phosphate (DK-MTP-1-P) into 2-hydroxy-3-keto-5-methylthiopentenyl-1-phosphate (HK-MTPenyl-1-P). This chain is 2,3-diketo-5-methylthiopentyl-1-phosphate enolase, found in Bacillus pumilus (strain SAFR-032).